The following is a 148-amino-acid chain: Protein RESISTANCE TO POWDERY MILDEW 8.1 (148 aa).

One can recognise an RPW8 domain in the interval 1–148 (MPIGELAIGA…VISACSKIRA (148 aa)). A helical membrane pass occupies residues 7–23 (AIGAVLGVGAQAIYDRF). The stretch at 120-140 (DDIKEIKAKISEMDTKLAEVI) forms a coiled coil.

The protein belongs to the plant RPW8 protein family.

The protein resides in the membrane. Its function is as follows. Disease resistance (R) protein that induces localized, salicylic acid-dependent defenses. Confers resistance to powdery mildew (e.g. Erysiphe cichoracearum UCSC1). This chain is Protein RESISTANCE TO POWDERY MILDEW 8.1, found in Arabidopsis thaliana (Mouse-ear cress).